The chain runs to 484 residues: Sperm motility kinase 2B (484 aa).

Residues 8–256 (YVMLETIGHG…VAEVMVHPWV (249 aa)) enclose the Protein kinase domain. Residues 14-22 (IGHGGCSKV) and Lys-37 contribute to the ATP site. Residue Asp-127 is the Proton acceptor of the active site. In terms of domain architecture, UBA spans 272-314 (PLKPNPAIVKAMGYIGFQAQDIEDSLRQRKFNETMASYCLLKK). 2 stretches are compositionally biased toward polar residues: residues 356-373 (PTSL…CGRS) and 422-434 (SSDD…TSAS). Disordered regions lie at residues 356-400 (PTSL…TMDH) and 422-450 (SSDD…RGIK).

Belongs to the protein kinase superfamily. CAMK Ser/Thr protein kinase family. Smok subfamily. In terms of tissue distribution, testis-specific. Expressed in the testis from 22 days postpartum (22 dpp).

The enzyme catalyses L-seryl-[protein] + ATP = O-phospho-L-seryl-[protein] + ADP + H(+). It catalyses the reaction L-threonyl-[protein] + ATP = O-phospho-L-threonyl-[protein] + ADP + H(+). Its function is as follows. May play a role in sperm motility, especially in the regulation of flagellar function. The chain is Sperm motility kinase 2B from Mus musculus (Mouse).